Reading from the N-terminus, the 188-residue chain is Threonylcarbamoyl-AMP synthase (188 aa).

The 186-residue stretch at 3-188 (QLHPSDIKDI…RSGKILRNGQ (186 aa)) folds into the YrdC-like domain.

This sequence belongs to the SUA5 family. TsaC subfamily.

The protein localises to the cytoplasm. The enzyme catalyses L-threonine + hydrogencarbonate + ATP = L-threonylcarbamoyladenylate + diphosphate + H2O. In terms of biological role, required for the formation of a threonylcarbamoyl group on adenosine at position 37 (t(6)A37) in tRNAs that read codons beginning with adenine. Catalyzes the conversion of L-threonine, HCO(3)(-)/CO(2) and ATP to give threonylcarbamoyl-AMP (TC-AMP) as the acyladenylate intermediate, with the release of diphosphate. The chain is Threonylcarbamoyl-AMP synthase from Shewanella baltica (strain OS195).